The primary structure comprises 182 residues: Adenylate kinase (182 aa).

12–17 (GAGKGT) is a binding site for ATP. The NMP stretch occupies residues 32-61 (STGELLRKEIDLDTYLGKQVKDIMNKGELV). Residues threonine 33, arginine 38, 59 to 61 (ELV), 85 to 88 (GYPR), and glutamine 92 contribute to the AMP site. The tract at residues 126 to 132 (LRGRKDD) is LID. Residue arginine 127 coordinates ATP. Positions 129 and 140 each coordinate AMP. Glycine 168 contributes to the ATP binding site.

The protein belongs to the adenylate kinase family. As to quaternary structure, monomer.

The protein localises to the cytoplasm. It carries out the reaction AMP + ATP = 2 ADP. The protein operates within purine metabolism; AMP biosynthesis via salvage pathway; AMP from ADP: step 1/1. Functionally, catalyzes the reversible transfer of the terminal phosphate group between ATP and AMP. Plays an important role in cellular energy homeostasis and in adenine nucleotide metabolism. The protein is Adenylate kinase of Prochlorococcus marinus (strain MIT 9515).